A 593-amino-acid polypeptide reads, in one-letter code: Solute carrier family 40 member 3, chloroplastic (593 aa).

Positions 1-23 (MSMSKLLSPPPTSPPGPALSRLP) are disordered. The N-terminal 51 residues, 1–51 (MSMSKLLSPPPTSPPGPALSRLPCRRVAPPPVLPFPFPLRRLTSRRVFATS), are a transit peptide targeting the chloroplast. The segment covering 8 to 17 (SPPPTSPPGP) has biased composition (pro residues). 11 consecutive transmembrane segments (helical) span residues 181–201 (ILPV…AGPL), 219–239 (AAIQ…AFAV), 253–273 (FAVL…LGII), 303–322 (LLCE…KNNP), 323–343 (LTCI…LIFL), 403–423 (YVFV…TFLI), 431–451 (VIGA…FATA), 462–482 (AGAA…VVYL), 493–513 (LFAF…YSAI), 530–550 (IGAT…AVAV), and 557–577 (HFGA…GMYC).

Belongs to the ferroportin (FP) (TC 2.A.100) family. SLC40A subfamily.

It is found in the membrane. The protein localises to the plastid. It localises to the chloroplast envelope. May be involved in iron transport and iron homeostasis. The chain is Solute carrier family 40 member 3, chloroplastic from Oryza sativa subsp. japonica (Rice).